Consider the following 111-residue polypeptide: Large ribosomal subunit protein uL22 (111 aa).

This sequence belongs to the universal ribosomal protein uL22 family. In terms of assembly, part of the 50S ribosomal subunit.

Functionally, this protein binds specifically to 23S rRNA; its binding is stimulated by other ribosomal proteins, e.g. L4, L17, and L20. It is important during the early stages of 50S assembly. It makes multiple contacts with different domains of the 23S rRNA in the assembled 50S subunit and ribosome. The globular domain of the protein is located near the polypeptide exit tunnel on the outside of the subunit, while an extended beta-hairpin is found that lines the wall of the exit tunnel in the center of the 70S ribosome. This chain is Large ribosomal subunit protein uL22, found in Mycoplasma capricolum subsp. capricolum (strain California kid / ATCC 27343 / NCTC 10154).